We begin with the raw amino-acid sequence, 522 residues long: Glucose-6-phosphate isomerase (522 aa).

The active-site Proton donor is the Glu351. Residues His382 and Lys491 contribute to the active site.

Belongs to the GPI family.

Its subcellular location is the cytoplasm. The catalysed reaction is alpha-D-glucose 6-phosphate = beta-D-fructose 6-phosphate. Its pathway is carbohydrate biosynthesis; gluconeogenesis. The protein operates within carbohydrate degradation; glycolysis; D-glyceraldehyde 3-phosphate and glycerone phosphate from D-glucose: step 2/4. In terms of biological role, catalyzes the reversible isomerization of glucose-6-phosphate to fructose-6-phosphate. This chain is Glucose-6-phosphate isomerase, found in Albidiferax ferrireducens (strain ATCC BAA-621 / DSM 15236 / T118) (Rhodoferax ferrireducens).